Consider the following 111-residue polypeptide: RNA polymerase-binding protein RbpA (111 aa).

Belongs to the RNA polymerase-binding protein RbpA family. Forms a complex with the RNAP catalytic core and with free principal sigma factors.

Its function is as follows. Binds to RNA polymerase (RNAP), stimulating transcription from principal, but not alternative sigma factor promoters. The polypeptide is RNA polymerase-binding protein RbpA (Mycobacterium tuberculosis (strain CDC 1551 / Oshkosh)).